Here is a 243-residue protein sequence, read N- to C-terminus: Pyridoxine 5'-phosphate synthase (243 aa).

Asn-6 contributes to the 3-amino-2-oxopropyl phosphate binding site. A 1-deoxy-D-xylulose 5-phosphate-binding site is contributed by 8-9; that stretch reads DH. A 3-amino-2-oxopropyl phosphate-binding site is contributed by Arg-17. His-42 serves as the catalytic Proton acceptor. Residues Arg-44 and His-49 each contribute to the 1-deoxy-D-xylulose 5-phosphate site. Glu-72 serves as the catalytic Proton acceptor. Thr-102 is a binding site for 1-deoxy-D-xylulose 5-phosphate. Catalysis depends on His-192, which acts as the Proton donor. 3-amino-2-oxopropyl phosphate-binding positions include Gly-193 and 214–215; that span reads GH.

The protein belongs to the PNP synthase family. As to quaternary structure, homooctamer; tetramer of dimers.

The protein localises to the cytoplasm. The enzyme catalyses 3-amino-2-oxopropyl phosphate + 1-deoxy-D-xylulose 5-phosphate = pyridoxine 5'-phosphate + phosphate + 2 H2O + H(+). Its pathway is cofactor biosynthesis; pyridoxine 5'-phosphate biosynthesis; pyridoxine 5'-phosphate from D-erythrose 4-phosphate: step 5/5. Functionally, catalyzes the complicated ring closure reaction between the two acyclic compounds 1-deoxy-D-xylulose-5-phosphate (DXP) and 3-amino-2-oxopropyl phosphate (1-amino-acetone-3-phosphate or AAP) to form pyridoxine 5'-phosphate (PNP) and inorganic phosphate. The protein is Pyridoxine 5'-phosphate synthase of Sulfurihydrogenibium sp. (strain YO3AOP1).